The following is a 141-amino-acid chain: Hemoglobin subunit alpha (141 aa).

One can recognise a Globin domain in the interval 1-141; sequence VLSANDKANV…VSTVLTSKYR (141 aa). Residue Ser-3 is modified to Phosphoserine. 2 positions are modified to N6-succinyllysine: Lys-7 and Lys-11. An N6-acetyllysine; alternate modification is found at Lys-16. The residue at position 16 (Lys-16) is an N6-succinyllysine; alternate. Tyr-24 bears the Phosphotyrosine mark. Residue Ser-35 is modified to Phosphoserine. An N6-succinyllysine modification is found at Lys-40. Ser-49 carries the phosphoserine modification. His-58 lines the O2 pocket. His-87 contributes to the heme b binding site. Ser-102 bears the Phosphoserine mark. Thr-108 carries the phosphothreonine modification. Ser-124 and Ser-131 each carry phosphoserine. Phosphothreonine occurs at positions 134 and 137. Ser-138 carries the post-translational modification Phosphoserine.

The protein belongs to the globin family. In terms of assembly, heterotetramer of two alpha chains and two beta chains. As to expression, red blood cells.

Involved in oxygen transport from the lung to the various peripheral tissues. Functionally, hemopressin acts as an antagonist peptide of the cannabinoid receptor CNR1. Hemopressin-binding efficiently blocks cannabinoid receptor CNR1 and subsequent signaling. The chain is Hemoglobin subunit alpha (HBA) from Suncus murinus (Asian house shrew).